A 164-amino-acid chain; its full sequence is Putative 4-hydroxy-4-methyl-2-oxoglutarate aldolase (164 aa).

Substrate contacts are provided by residues 75 to 78 (GDML) and Arg97. Residue Asp98 coordinates a divalent metal cation.

It belongs to the class II aldolase/RraA-like family. Homotrimer. Requires a divalent metal cation as cofactor.

It carries out the reaction 4-hydroxy-4-methyl-2-oxoglutarate = 2 pyruvate. The enzyme catalyses oxaloacetate + H(+) = pyruvate + CO2. Its function is as follows. Catalyzes the aldol cleavage of 4-hydroxy-4-methyl-2-oxoglutarate (HMG) into 2 molecules of pyruvate. Also contains a secondary oxaloacetate (OAA) decarboxylase activity due to the common pyruvate enolate transition state formed following C-C bond cleavage in the retro-aldol and decarboxylation reactions. In Hahella chejuensis (strain KCTC 2396), this protein is Putative 4-hydroxy-4-methyl-2-oxoglutarate aldolase.